The sequence spans 444 residues: tRNA modification GTPase MnmE (444 aa).

The (6S)-5-formyl-5,6,7,8-tetrahydrofolate site is built by R24, E81, and K121. A TrmE-type G domain is found at 218–368; sequence GLTVVIAGPP…LLDALVGFAR (151 aa). GTP contacts are provided by residues 228 to 233, 247 to 253, 272 to 275, and 349 to 351; these read NAGKST, SPQAGTT, DTAG, and SAR. Mg(2+) contacts are provided by S232 and T253. Position 444 (K444) interacts with (6S)-5-formyl-5,6,7,8-tetrahydrofolate.

It belongs to the TRAFAC class TrmE-Era-EngA-EngB-Septin-like GTPase superfamily. TrmE GTPase family. In terms of assembly, homodimer. Heterotetramer of two MnmE and two MnmG subunits. Requires K(+) as cofactor.

It is found in the cytoplasm. In terms of biological role, exhibits a very high intrinsic GTPase hydrolysis rate. Involved in the addition of a carboxymethylaminomethyl (cmnm) group at the wobble position (U34) of certain tRNAs, forming tRNA-cmnm(5)s(2)U34. This is tRNA modification GTPase MnmE from Bradyrhizobium sp. (strain ORS 278).